The sequence spans 80 residues: UPF0125 protein XF_2346 (80 aa).

This sequence belongs to the UPF0125 (RnfH) family.

The polypeptide is UPF0125 protein XF_2346 (Xylella fastidiosa (strain 9a5c)).